A 497-amino-acid polypeptide reads, in one-letter code: Cytochrome P450 71A20 (497 aa).

Residues 3–23 traverse the membrane as a helical segment; that stretch reads MILITLCLTTLLALLLKSILK. Residue Cys-440 participates in heme binding.

This sequence belongs to the cytochrome P450 family. It depends on heme as a cofactor.

It is found in the membrane. In Arabidopsis thaliana (Mouse-ear cress), this protein is Cytochrome P450 71A20 (CYP71A20).